A 208-amino-acid polypeptide reads, in one-letter code: U11/U12 small nuclear ribonucleoprotein 35 kDa protein (208 aa).

The 79-residue stretch at 50 to 128 folds into the RRM domain; the sequence is LTLFVARLNP…YELLVDVEQE (79 aa). The disordered stretch occupies residues 133–208; that stretch reads GWRPRRLGGG…TEDRTHRHTY (76 aa). Positions 171–208 are enriched in basic and acidic residues; it reads RPAEPRGRETERERDRRDYRDRRHERTHTEDRTHRHTY.

The protein resides in the nucleus. The chain is U11/U12 small nuclear ribonucleoprotein 35 kDa protein (snrnp35) from Danio rerio (Zebrafish).